The primary structure comprises 291 residues: D-alanyl-D-alanine carboxypeptidase (291 aa).

A signal peptide spans 1–29 (MRLRRAAATVITTGALLAAGTLGATPATA). The Acyl-ester intermediate role is filled by S64. K67 functions as the Proton acceptor in the catalytic mechanism. S125 is an active-site residue. Substrate is bound at residue K242.

Belongs to the peptidase S11 family.

The protein localises to the secreted. The enzyme catalyses Preferential cleavage: (Ac)2-L-Lys-D-Ala-|-D-Ala. Also transpeptidation of peptidyl-alanyl moieties that are N-acyl substituents of D-alanine.. The protein operates within cell wall biogenesis; peptidoglycan biosynthesis. Removes C-terminal D-alanyl residues from sugar-peptide cell wall precursors. This is D-alanyl-D-alanine carboxypeptidase from Streptomyces sp. (strain K15).